The following is a 688-amino-acid chain: Methionine--tRNA ligase (688 aa).

The 'HIGH' region signature appears at 20 to 30; that stretch reads PYANGSIHLGH. Zn(2+) is bound by residues Cys151, Cys154, Cys164, and Cys167. A 'KMSKS' region motif is present at residues 337 to 341; it reads KMSKS. Residue Lys340 coordinates ATP. The 102-residue stretch at 587 to 688 folds into the tRNA-binding domain; that stretch reads TFAQVDLRIA…EGAQPGMRVM (102 aa).

Belongs to the class-I aminoacyl-tRNA synthetase family. MetG type 1 subfamily. In terms of assembly, homodimer. Zn(2+) serves as cofactor.

Its subcellular location is the cytoplasm. The enzyme catalyses tRNA(Met) + L-methionine + ATP = L-methionyl-tRNA(Met) + AMP + diphosphate. In terms of biological role, is required not only for elongation of protein synthesis but also for the initiation of all mRNA translation through initiator tRNA(fMet) aminoacylation. This chain is Methionine--tRNA ligase, found in Vibrio parahaemolyticus serotype O3:K6 (strain RIMD 2210633).